Consider the following 578-residue polypeptide: Sulfite reductase [NADPH] hemoprotein beta-component (578 aa).

Residues cysteine 441, cysteine 447, cysteine 487, and cysteine 491 each contribute to the [4Fe-4S] cluster site. A siroheme-binding site is contributed by cysteine 491.

The protein belongs to the nitrite and sulfite reductase 4Fe-4S domain family. As to quaternary structure, alpha(8)-beta(8). The alpha component is a flavoprotein, the beta component is a hemoprotein. Siroheme serves as cofactor. The cofactor is [4Fe-4S] cluster.

The catalysed reaction is hydrogen sulfide + 3 NADP(+) + 3 H2O = sulfite + 3 NADPH + 4 H(+). It functions in the pathway sulfur metabolism; hydrogen sulfide biosynthesis; hydrogen sulfide from sulfite (NADPH route): step 1/1. In terms of biological role, component of the sulfite reductase complex that catalyzes the 6-electron reduction of sulfite to sulfide. This is one of several activities required for the biosynthesis of L-cysteine from sulfate. This chain is Sulfite reductase [NADPH] hemoprotein beta-component, found in Vibrio parahaemolyticus serotype O3:K6 (strain RIMD 2210633).